The chain runs to 215 residues: Pyrrolidone-carboxylate peptidase (215 aa).

Active-site residues include Glu80, Cys143, and His167.

This sequence belongs to the peptidase C15 family. In terms of assembly, homotetramer.

The protein localises to the cytoplasm. It carries out the reaction Release of an N-terminal pyroglutamyl group from a polypeptide, the second amino acid generally not being Pro.. Its function is as follows. Removes 5-oxoproline from various penultimate amino acid residues except L-proline. The sequence is that of Pyrrolidone-carboxylate peptidase from Bacillus cytotoxicus (strain DSM 22905 / CIP 110041 / 391-98 / NVH 391-98).